The sequence spans 635 residues: Probable Xaa-Pro aminopeptidase P (635 aa).

Residues aspartate 432, aspartate 443, glutamate 541, and glutamate 555 each contribute to the Mn(2+) site.

Belongs to the peptidase M24B family. It depends on Mn(2+) as a cofactor.

The enzyme catalyses Release of any N-terminal amino acid, including proline, that is linked to proline, even from a dipeptide or tripeptide.. In terms of biological role, catalyzes the removal of a penultimate prolyl residue from the N-termini of peptides. This is Probable Xaa-Pro aminopeptidase P (AMPP) from Arthroderma gypseum (strain ATCC MYA-4604 / CBS 118893) (Microsporum gypseum).